The following is a 428-amino-acid chain: Serine--tRNA ligase (428 aa).

Threonine 231–glutamate 233 contributes to the L-serine binding site. An ATP-binding site is contributed by arginine 262 to glutamate 264. Glutamate 285 lines the L-serine pocket. Glutamate 349–serine 352 lines the ATP pocket. Residue serine 385 coordinates L-serine.

Belongs to the class-II aminoacyl-tRNA synthetase family. Type-1 seryl-tRNA synthetase subfamily. As to quaternary structure, homodimer. The tRNA molecule binds across the dimer.

It is found in the cytoplasm. It carries out the reaction tRNA(Ser) + L-serine + ATP = L-seryl-tRNA(Ser) + AMP + diphosphate + H(+). The catalysed reaction is tRNA(Sec) + L-serine + ATP = L-seryl-tRNA(Sec) + AMP + diphosphate + H(+). The protein operates within aminoacyl-tRNA biosynthesis; selenocysteinyl-tRNA(Sec) biosynthesis; L-seryl-tRNA(Sec) from L-serine and tRNA(Sec): step 1/1. Catalyzes the attachment of serine to tRNA(Ser). Is also able to aminoacylate tRNA(Sec) with serine, to form the misacylated tRNA L-seryl-tRNA(Sec), which will be further converted into selenocysteinyl-tRNA(Sec). The sequence is that of Serine--tRNA ligase from Staphylococcus haemolyticus (strain JCSC1435).